A 286-amino-acid polypeptide reads, in one-letter code: MDITGKTRVLGIIGWPVAHSLSPLMQNAALEAMGLDWIYVPFAVRPEDLASAVAGLRTLGVSGFNVTIPHKTAIIPLLDRITPEARLMGAVNTVKREGDDLVGYNTDGEGFIRSLAEDLGFVPAGRRILVLGAGGAARAAVASLARGGAATVMIANRSVARGEELVEAFQGVFGGTQFAAMPLDIPLINAEVQNFDLLVNTTSVGMGETAFEGLDISRMNPAASVYDMVYAPWETPLLAEASRGGRRCANGIGMLVAQGECALAIWTGMEPPPGIMRRRVLAALKR.

Shikimate-binding positions include 20-22 and Thr67; that span reads SLS. Lys71 acts as the Proton acceptor in catalysis. Shikimate-binding residues include Asn92 and Asp107. NADP(+) is bound by residues 132 to 136 and Met228; that span reads GAGGA. Position 230 (Tyr230) interacts with shikimate. Gly251 contacts NADP(+).

Belongs to the shikimate dehydrogenase family. In terms of assembly, homodimer.

It catalyses the reaction shikimate + NADP(+) = 3-dehydroshikimate + NADPH + H(+). The protein operates within metabolic intermediate biosynthesis; chorismate biosynthesis; chorismate from D-erythrose 4-phosphate and phosphoenolpyruvate: step 4/7. In terms of biological role, involved in the biosynthesis of the chorismate, which leads to the biosynthesis of aromatic amino acids. Catalyzes the reversible NADPH linked reduction of 3-dehydroshikimate (DHSA) to yield shikimate (SA). The chain is Shikimate dehydrogenase (NADP(+)) from Geobacter metallireducens (strain ATCC 53774 / DSM 7210 / GS-15).